The following is a 500-amino-acid chain: Tektin-like protein 1 (500 aa).

The disordered stretch occupies residues 1-25 (MPVLLPSTDRDQDSRVGAPEWHQAA). Phosphoserine is present on Ser-14. The stretch at 198–229 (MLVWEREELKSMKRKMEKDMERSEALLKALAS) forms a coiled coil. A disordered region spans residues 265–286 (VDITRPPTPRTQGLKTPPPDPV). Tyr-372 is modified (phosphotyrosine). A coiled-coil region spans residues 422–448 (LTRHNLQMEKNLKELRTTHDNLAWSLN).

In terms of assembly, microtubule inner protein component of sperm flagellar doublet microtubules.

It localises to the cytoplasm. The protein resides in the cytoskeleton. The protein localises to the flagellum axoneme. Its function is as follows. Microtubule inner protein (MIP) part of the dynein-decorated doublet microtubules (DMTs) in sperm flagellar axoneme, which is required for motile flagellum beating. Forms an extensive interaction network cross-linking the lumen of axonemal doublet microtubules. In Rattus norvegicus (Rat), this protein is Tektin-like protein 1.